We begin with the raw amino-acid sequence, 170 residues long: Shikimate kinase (170 aa).

15–20 contacts ATP; sequence GTGKTT. Threonine 19 is a Mg(2+) binding site. Substrate is bound by residues aspartate 37, arginine 61, and glycine 82. Arginine 120 provides a ligand contact to ATP. Residue arginine 138 participates in substrate binding. Residue glutamine 154 coordinates ATP.

Belongs to the shikimate kinase family. As to quaternary structure, monomer. The cofactor is Mg(2+).

Its subcellular location is the cytoplasm. The enzyme catalyses shikimate + ATP = 3-phosphoshikimate + ADP + H(+). It functions in the pathway metabolic intermediate biosynthesis; chorismate biosynthesis; chorismate from D-erythrose 4-phosphate and phosphoenolpyruvate: step 5/7. Catalyzes the specific phosphorylation of the 3-hydroxyl group of shikimic acid using ATP as a cosubstrate. This chain is Shikimate kinase, found in Staphylococcus epidermidis (strain ATCC 35984 / DSM 28319 / BCRC 17069 / CCUG 31568 / BM 3577 / RP62A).